The primary structure comprises 492 residues: Glycylpeptide N-tetradecanoyltransferase 2 (492 aa).

A disordered region spans residues 1 to 77 (MAEDSESAAS…SASDSQEIKN (77 aa)). Positions 15-32 (ELDDQDTCGIDGDNEEEN) are enriched in acidic residues. Basic residues predominate over residues 46-57 (KKKKKKQKRKKE). Polar residues predominate over residues 61-72 (SGGTKSDSASDS). Tetradecanoyl-CoA is bound by residues histidine 111, tryptophan 116, leucine 244, valine 246, serine 252, arginine 254, valine 255, and alanine 256.

The protein belongs to the NMT family.

The protein resides in the cytoplasm. The protein localises to the membrane. It catalyses the reaction N-terminal glycyl-[protein] + tetradecanoyl-CoA = N-tetradecanoylglycyl-[protein] + CoA + H(+). The catalysed reaction is N-terminal glycyl-L-lysyl-[protein] + tetradecanoyl-CoA = N-terminal glycyl-(N(6)-tetradecanoyl)-L-lysyl-[protein] + CoA + H(+). In terms of biological role, adds a myristoyl group to the N-terminal glycine residue of certain cellular and viral proteins. Also able to mediate N-terminal lysine myristoylation of proteins. The polypeptide is Glycylpeptide N-tetradecanoyltransferase 2 (Danio rerio (Zebrafish)).